The primary structure comprises 380 residues: Magnesium-protoporphyrin IX monomethyl ester [oxidative] cyclase 1 (380 aa).

The protein belongs to the AcsF family. Fe cation is required as a cofactor.

It catalyses the reaction Mg-protoporphyrin IX 13-monomethyl ester + 3 NADPH + 3 O2 + 2 H(+) = 3,8-divinyl protochlorophyllide a + 3 NADP(+) + 5 H2O. The protein operates within porphyrin-containing compound metabolism; chlorophyll biosynthesis (light-independent). Its function is as follows. Catalyzes the formation of the isocyclic ring in chlorophyll biosynthesis. Mediates the cyclase reaction, which results in the formation of divinylprotochlorophyllide (Pchlide) characteristic of all chlorophylls from magnesium-protoporphyrin IX 13-monomethyl ester (MgPMME). The polypeptide is Magnesium-protoporphyrin IX monomethyl ester [oxidative] cyclase 1 (Thermosynechococcus vestitus (strain NIES-2133 / IAM M-273 / BP-1)).